The chain runs to 142 residues: Ninjurin-2 (142 aa).

The interval 1-21 (MESARENIDLQPGSSDPRSQP) is disordered. At 1-60 (MESARENIDLQPGSSDPRSQPINLNHYATKKSVAESMLDVALFMSNAMRLKAVLEQGPSS) the chain is on the extracellular side. Residues 12–21 (PGSSDPRSQP) are compositionally biased toward polar residues. Residues 25 to 37 (NHYATKKSVAESM) are helix alpha1. Residues 38–57 (LDVALFMSNAMRLKAVLEQG) form a helix alpha2 region. A helical transmembrane segment spans residues 61–92 (HYYTTLVTLISLSLLLQVVIGVLLVVIARLNL). The Cytoplasmic portion of the chain corresponds to 93 to 96 (NEVE). The helical transmembrane segment at 97-126 (KQWRLNQLNNAATILVFFTVVINVFITAFG) threads the bilayer. Gln-103 serves as a coordination point for cholesterol. Residues 127–142 (AHKTGFLAARASRNPL) are Extracellular-facing.

This sequence belongs to the ninjurin family. Homooligomer; in response to stimuli, homooligomerizes into filaments. In contrast to NINJ1, the filament is curved toward the intracellular space, preventing its circularization on a relatively flat membrane to mediate plasma membrane rupture: curvature is caused by cholesterol-binding at the cytoplasmic leaflet. In terms of tissue distribution, widely expressed. In adult, higher expression in the bone marrow and peripheral blood lymphocytes, medium in the lung, lymph node, thyroid, uterus, thymus, spleen, prostate and skeletal muscle, lower in the liver, placenta, brain, heart and kidney. In embryo, higher expression in the thymus, heart and liver, lower in the spleen, lung, brain and kidney.

The protein localises to the cell membrane. Its role in unclear. In contrast to NINJ1 paralog, does not mediate plasma membrane rupture (cytolysis) downstream of necroptotic and pyroptotic programmed cell death. While it is able to oligomerize and form filaments, filaments are curved toward the intracellular space, preventing circularization to mediate plasma membrane rupture. May act as a homophilic transmembrane adhesion molecule involved in nerve regeneration. Promotes axonal growth. The polypeptide is Ninjurin-2 (Homo sapiens (Human)).